The sequence spans 258 residues: Aspartate/glutamate leucyltransferase (258 aa).

Belongs to the R-transferase family. Bpt subfamily.

Its subcellular location is the cytoplasm. The enzyme catalyses N-terminal L-glutamyl-[protein] + L-leucyl-tRNA(Leu) = N-terminal L-leucyl-L-glutamyl-[protein] + tRNA(Leu) + H(+). The catalysed reaction is N-terminal L-aspartyl-[protein] + L-leucyl-tRNA(Leu) = N-terminal L-leucyl-L-aspartyl-[protein] + tRNA(Leu) + H(+). Its function is as follows. Functions in the N-end rule pathway of protein degradation where it conjugates Leu from its aminoacyl-tRNA to the N-termini of proteins containing an N-terminal aspartate or glutamate. In Rhodopseudomonas palustris (strain BisB18), this protein is Aspartate/glutamate leucyltransferase.